Reading from the N-terminus, the 152-residue chain is MFRGATLVNLDSKGRLSVPTRYREQLLENAAGQMVCTIDIHHPCLLLYPLPEWEIIEQKLSRLSSMNPVERRVQRLLLGHASECQMDGAGRLLIAPVLRQHAGLTKEVMLVGQFNKFELWDETTWHQQVKEDIDAEQLATGDLSERLQDLSL.

2 consecutive SpoVT-AbrB domains span residues alanine 5 to glutamate 52 and alanine 81 to threonine 124.

It belongs to the MraZ family. As to quaternary structure, forms oligomers.

Its subcellular location is the cytoplasm. The protein localises to the nucleoid. Negatively regulates its own expression and that of the subsequent genes in the proximal part of the division and cell wall (dcw) gene cluster. Acts by binding directly to DNA. May also regulate the expression of genes outside the dcw cluster. The sequence is that of Transcriptional regulator MraZ from Escherichia coli O45:K1 (strain S88 / ExPEC).